A 179-amino-acid chain; its full sequence is ATP synthase subunit b (179 aa).

The chain crosses the membrane as a helical span at residues 23 to 43 (IFWLIITFGILYVVLSKLILP).

The protein belongs to the ATPase B chain family. As to quaternary structure, F-type ATPases have 2 components, F(1) - the catalytic core - and F(0) - the membrane proton channel. F(1) has five subunits: alpha(3), beta(3), gamma(1), delta(1), epsilon(1). F(0) has three main subunits: a(1), b(2) and c(10-14). The alpha and beta chains form an alternating ring which encloses part of the gamma chain. F(1) is attached to F(0) by a central stalk formed by the gamma and epsilon chains, while a peripheral stalk is formed by the delta and b chains.

The protein localises to the cell inner membrane. Functionally, f(1)F(0) ATP synthase produces ATP from ADP in the presence of a proton or sodium gradient. F-type ATPases consist of two structural domains, F(1) containing the extramembraneous catalytic core and F(0) containing the membrane proton channel, linked together by a central stalk and a peripheral stalk. During catalysis, ATP synthesis in the catalytic domain of F(1) is coupled via a rotary mechanism of the central stalk subunits to proton translocation. In terms of biological role, component of the F(0) channel, it forms part of the peripheral stalk, linking F(1) to F(0). This chain is ATP synthase subunit b, found in Pelagibacter ubique (strain HTCC1062).